Here is a 1149-residue protein sequence, read N- to C-terminus: Guanine nucleotide exchange factor DBS (1149 aa).

The CRAL-TRIO domain occupies 52–224 (AATASDEIMH…DLGGTLDYCH (173 aa)). The Spectrin repeat unit spans residues 351–456 (LQLRHFEQGF…VTRRRGLLSK (106 aa)). Residues Ser457, Ser462, Ser471, and Ser480 each carry the phosphoserine modification. A coiled-coil region spans residues 503–529 (LETGAENKIQELNEIYKEYECILNQDL). Residues 555–627 (KKLAAKQTRP…RTSSTGEEEE (73 aa)) form a disordered region. A compositionally biased stretch (low complexity) spans 583-594 (PGSWRSSENSSS). The segment covering 607–616 (AKSEMSEPRQ) has biased composition (basic and acidic residues). A Phosphoserine modification is found at Ser621. The residue at position 622 (Thr622) is a Phosphothreonine. One can recognise a DH domain in the interval 632–812 (LRRHVMNELL…LGILKAVNDS (181 aa)). A PH domain is found at 841–950 (TDHKKGHTKV…IRKVLTSQLQ (110 aa)). The segment at 956–1033 (SQHRALEQSH…EAPEEDGGWS (78 aa)) is disordered. The span at 966-978 (SLPLPTPSSTSPT) shows a compositional bias: low complexity. Phosphoserine occurs at positions 1033, 1034, 1041, and 1042. An SH3 domain is found at 1055 to 1116 (LVPGKYTVVM…PASSLSTLLG (62 aa)).

It belongs to the MCF2 family. In terms of assembly, interacts with GTP-bound RAC1. Interacts with CDC42. Interacts with RHOA. Interacts with CCPG1, which results in specific inhibition of its exchange activity toward RHOA, but does not affect its activity on CDC42. In terms of tissue distribution, expressed at low levels in several hemopoietic cell lines and in thymus and spleen, and at higher levels in other tissues, particularly in brain.

It is found in the cytoplasm. The protein localises to the cell membrane. Its function is as follows. Guanine nucleotide exchange factor that catalyzes guanine nucleotide exchange on RHOA and CDC42, and thereby contributes to the regulation of RHOA and CDC42 signaling pathways. Seems to lack activity with RAC1. Becomes activated and highly tumorigenic by truncation of the N-terminus. The sequence is that of Guanine nucleotide exchange factor DBS (Mcf2l) from Mus musculus (Mouse).